A 468-amino-acid polypeptide reads, in one-letter code: 3-isopropylmalate dehydratase large subunit (468 aa).

A disordered region spans residues 53–74; sequence QPSKTVATMDHNVPTDSRDLAG. [4Fe-4S] cluster is bound by residues C347, C407, and C410.

This sequence belongs to the aconitase/IPM isomerase family. LeuC type 1 subfamily. Heterodimer of LeuC and LeuD. Requires [4Fe-4S] cluster as cofactor.

The enzyme catalyses (2R,3S)-3-isopropylmalate = (2S)-2-isopropylmalate. It participates in amino-acid biosynthesis; L-leucine biosynthesis; L-leucine from 3-methyl-2-oxobutanoate: step 2/4. Catalyzes the isomerization between 2-isopropylmalate and 3-isopropylmalate, via the formation of 2-isopropylmaleate. In Pasteurella multocida (strain Pm70), this protein is 3-isopropylmalate dehydratase large subunit.